Reading from the N-terminus, the 65-residue chain is MRNELFQQAKSFVQQAVMVTNGFEEGDQEQAILRAKNAVSSAYANSTDAERQQLHQFQNQLDKLQ.

This is an uncharacterized protein from Bacillus subtilis (strain 168).